Consider the following 775-residue polypeptide: Chitin synthase 6 (775 aa).

Transmembrane regions (helical) follow at residues 19-39 (VLLM…YCLV), 54-74 (CIIV…IMVV), 94-114 (LQWF…LFCI), 441-461 (FMQN…LAIM), 470-490 (LPVG…LYFG), and 498-518 (IWLY…YMVY). Low complexity predominate over residues 532 to 541 (RADAAAADSH). Disordered regions lie at residues 532–603 (RADA…DGKF) and 702–775 (PSAF…KTSR). Basic and acidic residues predominate over residues 542–556 (TTAREAAEQAEKQGD). Positions 577-586 (NRESTTTSEL) are enriched in polar residues. Over residues 702–713 (PSAFPHAHSASA) the composition is skewed to low complexity. A glycan (N-linked (GlcNAc...) asparagine) is linked at Asn724. Positions 732–741 (RSEDIQRFSE) are enriched in basic and acidic residues. Polar residues predominate over residues 754 to 763 (SRNVGNSSFA). A glycan (N-linked (GlcNAc...) asparagine) is linked at Asn759. Over residues 766-775 (MAKRTPKTSR) the composition is skewed to basic residues.

The protein belongs to the chitin synthase family. Class VII subfamily.

Its subcellular location is the cell membrane. It catalyses the reaction [(1-&gt;4)-N-acetyl-beta-D-glucosaminyl](n) + UDP-N-acetyl-alpha-D-glucosamine = [(1-&gt;4)-N-acetyl-beta-D-glucosaminyl](n+1) + UDP + H(+). Its function is as follows. Polymerizes chitin, a structural polymer of the cell wall and septum, by transferring the sugar moiety of UDP-GlcNAc to the non-reducing end of the growing chitin polymer. Shows additive effects in septum formation with CHS1, CHS2, CHS3A, CHS4, CHS5 and CHS7. Involved in virulence and mediates mycotoxin deoxinivalenol (DON) biosynthesis via the regulation of the expression of TRI4, TRI5 and TRI6. This Gibberella zeae (strain ATCC MYA-4620 / CBS 123657 / FGSC 9075 / NRRL 31084 / PH-1) (Wheat head blight fungus) protein is Chitin synthase 6.